An 894-amino-acid chain; its full sequence is Protein NLP9 (894 aa).

An RWP-RK domain is found at 517 to 603 (QEISGARRLE…LDSVQGVEGG (87 aa)). Positions 578–598 (RKINKVNRSLRKIQTVLDSVQ) form a coiled coil. The interval 732 to 763 (NTRIERGNGTVEPNHSISSSMSDSSNSSGAVL) is disordered. Over residues 747 to 763 (SISSSMSDSSNSSGAVL) the composition is skewed to low complexity. Residues 792–875 (TLTVKATYRE…HTVKFLVRDI (84 aa)) enclose the PB1 domain.

It is found in the nucleus. Probable transcription factor. The protein is Protein NLP9 (NLP9) of Arabidopsis thaliana (Mouse-ear cress).